Here is a 108-residue protein sequence, read N- to C-terminus: UPF0166 protein MJ1524 (108 aa).

Belongs to the UPF0166 family.

This Methanocaldococcus jannaschii (strain ATCC 43067 / DSM 2661 / JAL-1 / JCM 10045 / NBRC 100440) (Methanococcus jannaschii) protein is UPF0166 protein MJ1524.